The sequence spans 615 residues: ATP-dependent zinc metalloprotease FtsH 2 (615 aa).

Over 1–7 (MNEPNRN) the chain is Cytoplasmic. The chain crosses the membrane as a helical span at residues 8–28 (FFWIFFLILGIFWLQSVWFGS). Residues 29–99 (RTVQQIPYSQ…VTYRREIENT (71 aa)) lie on the Periplasmic side of the membrane. The chain crosses the membrane as a helical span at residues 100–120 (FFRDLLSWVVPALIFVAVFLY). At 121 to 615 (FSRKFAEKGG…APQRERDLSV (495 aa)) the chain is on the cytoplasmic side. Residue 195–202 (GPPGTGKT) participates in ATP binding. Histidine 418 contributes to the Zn(2+) binding site. The active site involves glutamate 419. Positions 422 and 495 each coordinate Zn(2+).

The protein in the central section; belongs to the AAA ATPase family. In the C-terminal section; belongs to the peptidase M41 family. In terms of assembly, homohexamer. Zn(2+) serves as cofactor.

The protein localises to the cell inner membrane. In terms of biological role, acts as a processive, ATP-dependent zinc metallopeptidase for both cytoplasmic and membrane proteins. Plays a role in the quality control of integral membrane proteins. The chain is ATP-dependent zinc metalloprotease FtsH 2 from Bdellovibrio bacteriovorus (strain ATCC 15356 / DSM 50701 / NCIMB 9529 / HD100).